The primary structure comprises 310 residues: Atrochrysone carboxyl ACP thioesterase CPUR_05436 (310 aa).

His105, His107, Asp109, and His110 together coordinate Zn(2+). The active-site Proton donor/acceptor is Asp109.

Belongs to the metallo-beta-lactamase superfamily. It depends on Zn(2+) as a cofactor.

It catalyses the reaction atrochrysone carboxyl-[ACP] + H2O = atrochrysone carboxylate + holo-[ACP] + H(+). Its pathway is pigment biosynthesis. In terms of biological role, atrochrysone carboxyl ACP thioesterase; part of the ergochrome gene cluster responsible for the typical purple-black color of the ergot sclerotia. The ergochrome gene cluster produces several ergot pigments including the yellow ergochrome secalonic acid and its derivatives, as well as the red anthraquinones endocrocin and clavorubin. The pathway begins with the synthesis of atrochrysone thioester by the polyketide synthase (PKS) CPUR_05437. The atrochrysone carboxyl ACP thioesterase CPUR_05436 then breaks the thioester bond and releases the atrochrysone carboxylic acid from CPUR_05437. The atrochrysone carboxylic acid is then converted to atrochrysone which is further transformed into emodin anthrone. The next step is performed by the anthrone oxygenase CPUR_05434 that catalyzes the oxidation of emodinanthrone to emodin. Emodin is further modified to yield monodictyphenone via several steps involving CPUR_05427, CPUR_05428, CPUR_05429 and CPUR_05430. The short chain dehydrogenase/reductase CPUR_05418 then catalyzes the C-5 ketoreduction to give the xanthone skeleton of the monomeric units. Ergochromes formation requires further dimerization steps of different xanthone units, probably catalyzed by the cytochrome P450 monooxygenase CPUR_05419. CPUR_05425, CPUR_05426 and CPUR_05431 are unique to Claviceps, thus it is likely that they are involved in further modification of xanthone units or in their dimerization. The yellow ergochromes and the red anthraquinone pigments endocrocin and clavorubin are products from the same PKS derived precursors and the latter are likely shunt products in the pathway of xanthone biosynthesis. It is proposed that atrochrysone carboxylic acid released from the PKS CPUR_05437 can also be converted to endocrocin anthrone which is further oxidized into endocrocin by CPUR_05435. Endocrocin could be then modified to clavorubin, possibly by CPUR_05423 and CPUR_05431. Clavorubin is the principal anthraquinone metabolite produced by the cluster with a much higher yield compared to endocrocin. The sequence is that of Atrochrysone carboxyl ACP thioesterase CPUR_05436 from Claviceps purpurea (strain 20.1) (Ergot fungus).